The chain runs to 162 residues: Caveolin-2 (162 aa).

The Cytoplasmic segment spans residues methionine 1–lysine 86. Tyrosine 19 is subject to Phosphotyrosine; by SRC. Phosphoserine occurs at positions 20, 23, and 36. The helical intramembrane region spans phenylalanine 87–leucine 107. Over serine 108–aspartate 162 the chain is Cytoplasmic.

The protein belongs to the caveolin family. Monomer or homodimer. Interacts with CAV1; the interaction forms a stable heterooligomeric complex that is required for targeting to lipid rafts and for caveolae formation. Tyrosine phosphorylated forms do not form heterooligomers with the Tyr-19-phosphorylated form existing as a monomer or dimer. Interacts (tyrosine phosphorylated form) with the SH2 domain-containing proteins, RASA1, NCK1 and SRC. Interacts (tyrosine phosphorylated form) with INSR. Interacts (Tyr-19 phosphorylated form) with MAPK1 (phosphorylated form); the interaction, promoted by insulin, leads to nuclear location and MAPK1 activation. Interacts with STAT3; the interaction is increased on insulin-induced tyrosine phosphorylation leading to STAT activation. Phosphorylated on serine and tyrosine residues. CAV1 promotes phosphorylation on Ser-23 which then targets the complex to the plasma membrane, lipid rafts and caveolae. Phosphorylation on Ser-36 appears to modulate mitosis in endothelial cells. Phosphorylation on Tyr-19 is required for insulin-induced phosphorylation of MAPK1 and DNA binding of STAT3. Tyrosine phosphorylation is induced by both EGF and insulin.

The protein localises to the nucleus. It is found in the cytoplasm. It localises to the golgi apparatus membrane. Its subcellular location is the cell membrane. The protein resides in the membrane. The protein localises to the caveola. In terms of biological role, may act as a scaffolding protein within caveolar membranes. Interacts directly with G-protein alpha subunits and can functionally regulate their activity. Acts as an accessory protein in conjunction with CAV1 in targeting to lipid rafts and driving caveolae formation. The Ser-36 phosphorylated form has a role in modulating mitosis in endothelial cells. Positive regulator of cellular mitogenesis of the MAPK signaling pathway. Required for the insulin-stimulated nuclear translocation and activation of MAPK1 and STAT3, and the subsequent regulation of cell cycle progression. The sequence is that of Caveolin-2 (CAV2) from Canis lupus familiaris (Dog).